Reading from the N-terminus, the 267-residue chain is Hydroxynaphthalene reductase-like protein Arp2 (267 aa).

NADP(+)-binding residues include I25, N45, D71, and N98. Active-site proton donor residues include S147 and S148. The NADP(+) site is built by Y162, K166, V195, and T197. The Proton acceptor role is filled by Y162. The Lowers pKa of active site Tyr role is filled by K166.

The protein belongs to the short-chain dehydrogenases/reductases (SDR) family.

Functionally, hydroxynaphthalene reductase-like protein; part of the Pks2 gene cluster that mediates the formation of infectious structures (appressoria), enabling these fungi to kill insects faster. The product of the Pks2 gene cluster is different from the one of Pks1 and has still not been identified. This is Hydroxynaphthalene reductase-like protein Arp2 from Metarhizium majus (strain ARSEF 297).